The primary structure comprises 711 residues: Angiogenic factor with G patch and FHA domains 1 (711 aa).

Pro residues predominate over residues 1-19 (MASEAPSPPSPSPPPPASP). Disordered stretches follow at residues 1 to 23 (MASE…EPEL), 137 to 184 (ALDP…EGPA), 260 to 297 (PYQT…SEDQ), and 311 to 400 (EHSG…EDEE). Ala-2 carries the post-translational modification N-acetylalanine. Phosphoserine is present on residues Ser-7 and Ser-12. A coiled-coil region spans residues 19–85 (PEPELAQLRR…SKILHCGKNE (67 aa)). Polar residues predominate over residues 167 to 176 (AVTSDSQESV). A compositionally biased stretch (basic residues) spans 270–279 (RERRLKKRRK). A compositionally biased stretch (basic and acidic residues) spans 287-297 (NEEKDLSSEDQ). The residue at position 344 (Ser-344) is a Phosphoserine. Acidic residues predominate over residues 361–370 (SESEPEEGEI). Residues 374–391 (QSEKSYDGDSSSGDRETS) are compositionally biased toward basic and acidic residues. One can recognise an FHA domain in the interval 431–484 (ATIGREKDMEHTVRIPEVAVSKFHAEVYFDHDLQSYVLVDQGSQNGTIVNGKQI). Composition is skewed to basic and acidic residues over residues 579–606 (LKNP…RDDA) and 613–623 (EITDSNKGRKM). Residues 579 to 623 (LKNPKYKDRAGKRREQVGSEGTFQRDDAPASVHSEITDSNKGRKM) form a disordered region. The G-patch domain maps to 616–662 (DSNKGRKMLEKMGWKRGEGLGKDGGGMKTPIQLQLRRTHAGLGTGKL). Lys-661 carries the N6-acetyllysine modification. Residues 690-699 (FTENKPRKET) show a composition bias toward basic and acidic residues. The disordered stretch occupies residues 690 to 711 (FTENKPRKETPGAVPWVTGTAE).

In terms of assembly, interacts with the secreted angiogenic factor TNFSF12.

Its subcellular location is the cytoplasm. It localises to the secreted. In terms of biological role, promotes angiogenesis and the proliferation of endothelial cells. Able to bind to endothelial cells and promote cell proliferation, suggesting that it may act in an autocrine fashion. The chain is Angiogenic factor with G patch and FHA domains 1 (Aggf1) from Mus musculus (Mouse).